We begin with the raw amino-acid sequence, 139 residues long: Maximins 4/H3 type 6 (139 aa).

A signal peptide spans 1-18 (MNFKYIVAVSFLIASAYA). The propeptide occupies 19–43 (RSVQNDEQSLSQRDVLEEESLREIR). Asn-70 is modified (asparagine amide). Positions 74–118 (TAEDHEVMKRLEAVMRDLDSLDHPEEASERETRGFNQDEIAKEKR) are excised as a propeptide. Ile-138 carries the post-translational modification Isoleucine amide.

This sequence belongs to the bombinin family. As to expression, expressed by the skin glands.

The protein localises to the secreted. Functionally, maximin-4 shows antibacterial activity against both Gram-positive and Gram-negative bacteria. It also shows antimicrobial activity against the fungus C.albicans, but not against A.flavus nor P.uticale. It has little hemolytic activity. It does not possess a significant cytotoxicity against tumor cell lines. It does not possess a significant anti-HIV activity. Maximin-H3 shows antibacterial activity against both Gram-positive and Gram-negative bacteria. It also shows antimicrobial activity against the fungus C.albicans. Shows strong hemolytic activity. The polypeptide is Maximins 4/H3 type 6 (Bombina maxima (Giant fire-bellied toad)).